Consider the following 332-residue polypeptide: Ribosomal RNA small subunit methyltransferase C (332 aa).

This sequence belongs to the methyltransferase superfamily. RsmC family. Monomer.

The protein resides in the cytoplasm. The enzyme catalyses guanosine(1207) in 16S rRNA + S-adenosyl-L-methionine = N(2)-methylguanosine(1207) in 16S rRNA + S-adenosyl-L-homocysteine + H(+). Functionally, specifically methylates the guanine in position 1207 of 16S rRNA in the 30S particle. This Pseudomonas paraeruginosa (strain DSM 24068 / PA7) (Pseudomonas aeruginosa (strain PA7)) protein is Ribosomal RNA small subunit methyltransferase C.